A 757-amino-acid chain; its full sequence is Voltage-gated potassium channel KCNC3 (757 aa).

An important for normal N-type inactivation region spans residues 1 to 78 (MLSSVCVSSF…CPGLPAAAMG (78 aa)). The disordered stretch occupies residues 1–87 (MLSSVCVSSF…GRHGGGGGDS (87 aa)). Over 1–290 (MLSSVCVSSF…EDPYSSRAAR (290 aa)) the chain is Cytoplasmic. Positions 21-40 (PAPPPQPPESPPPPPLPPQQ) are enriched in pro residues. Over residues 41 to 52 (QQPAQPGPAASP) the composition is skewed to low complexity. 4 residues coordinate Zn(2+): histidine 157, cysteine 163, cysteine 184, and cysteine 185. Residues 210-219 (AANAANAAGA) show a composition bias toward low complexity. Residues 210–232 (AANAANAAGAHDGGLDDEAGAGG) form a disordered region. Residues 291–309 (YVAFASLFFILISITTFCL) form a helical membrane-spanning segment. Asparagine 320 and asparagine 336 each carry an N-linked (GlcNAc...) asparagine glycan. The chain crosses the membrane as a helical span at residues 351–370 (VEGVCVVWFTFEFLMRITFC). Topologically, residues 371–379 (PDKVEFLKS) are cytoplasmic. The helical transmembrane segment at 380-398 (SLNIIDCVAILPFYLEVGL) threads the bilayer. The helical; Voltage-sensor transmembrane segment at 412-434 (FLRVVRFVRILRIFKLTRHFVGL) threads the bilayer. At 435-447 (RVLGHTLRASTNE) the chain is on the cytoplasmic side. A helical transmembrane segment spans residues 448–469 (FLLLIIFLALGVLIFATMIYYA). Asparagine 483 carries an N-linked (GlcNAc...) asparagine glycan. The K(+) site is built by threonine 503, leucine 504, glycine 505, and tyrosine 506. The Selectivity filter signature appears at 503 to 508 (TLGYGD). Residues 518 to 539 (LVGALCALAGVLTIAMPVPVIV) traverse the membrane as a helical segment. Residues 540–757 (NNFGMYYSLA…NANAAAWISP (218 aa)) are Cytoplasmic-facing. Residues 556-613 (PKKKNKHIPRPPQPGSPNYCKPDPPPPPPPHPHHGSGGISPPPPITPPSMGVTVAGAY) are disordered. The residue at position 625 (arginine 625) is an Omega-N-methylarginine. The disordered stretch occupies residues 682–746 (QPAMSPEDKS…KPGPPSFLPD (65 aa)). 2 positions are modified to phosphoserine: serine 686 and serine 691. Pro residues predominate over residues 728–743 (PPLPPQDWRKPGPPSF).

This sequence belongs to the potassium channel family. C (Shaw) (TC 1.A.1.2) subfamily. Kv3.3/KCNC3 sub-subfamily. Homotetramer. Heterotetramer with KCNC1. Interacts (via C-terminus) with HAX1; this interaction modulates channel gating. Identified in a complex with ACTR3, a subunit of the Arp2/3 complex; this interaction is indirect and depends on the presence of HAX1. In terms of processing, N-glycosylated.

It localises to the cell membrane. The protein resides in the presynaptic cell membrane. The protein localises to the perikaryon. Its subcellular location is the cell projection. It is found in the axon. It localises to the dendrite. The protein resides in the dendritic spine membrane. The protein localises to the cytoplasm. Its subcellular location is the cell cortex. It is found in the cytoskeleton. It carries out the reaction K(+)(in) = K(+)(out). Functionally, voltage-gated potassium channel that plays an important role in the rapid repolarization of fast-firing brain neurons. The channel opens in response to the voltage difference across the membrane, forming a potassium-selective channel through which potassium ions pass in accordance with their electrochemical gradient. The channel displays rapid activation and inactivation kinetics. It plays a role in the regulation of the frequency, shape and duration of action potentials in Purkinje cells. Required for normal survival of cerebellar neurons, probably via its role in regulating the duration and frequency of action potentials that in turn regulate the activity of voltage-gated Ca(2+) channels and cellular Ca(2+) homeostasis. Required for normal motor function. Plays a role in the reorganization of the cortical actin cytoskeleton and the formation of actin veil structures in neuronal growth cones via its interaction with HAX1 and the Arp2/3 complex. In Homo sapiens (Human), this protein is Voltage-gated potassium channel KCNC3 (KCNC3).